Here is a 439-residue protein sequence, read N- to C-terminus: Enolase (439 aa).

Substrate is bound by residues His157 and Glu166. The active-site Proton donor is the Glu209. Residues Asp244, Glu297, and Asp324 each contribute to the Mg(2+) site. Glu297 and Asp324 together coordinate substrate. Lys349 serves as the catalytic Proton acceptor. Substrate-binding positions include Ser376 to Ser379 and Lys400.

This sequence belongs to the enolase family. Homodimer. Mg(2+) serves as cofactor.

It is found in the cytoplasm. The catalysed reaction is (2R)-2-phosphoglycerate = phosphoenolpyruvate + H2O. It functions in the pathway carbohydrate degradation; glycolysis; pyruvate from D-glyceraldehyde 3-phosphate: step 4/5. In Mastigamoeba balamuthi (Phreatamoeba balamuthi), this protein is Enolase (ENOL).